We begin with the raw amino-acid sequence, 45 residues long: Omega-hexatoxin-Hv2a (45 aa).

3 cysteine pairs are disulfide-bonded: Cys-4–Cys-18, Cys-11–Cys-24, and Cys-17–Cys-29.

This sequence belongs to the neurotoxin 15 family. 02 (omega-actx) subfamily. Expressed by the venom gland.

It is found in the secreted. Its function is as follows. Potent inhibitor of insect (bee brain), but not mammalian (rat trigeminal neurons), voltage-gated calcium channels (Cav). In vivo, injection into lone star ticks (Amblyomma americanum) induces curling of all eight legs into closed loops, followed by death. The chain is Omega-hexatoxin-Hv2a from Hadronyche versuta (Blue mountains funnel-web spider).